The following is a 271-amino-acid chain: MNSKLSLSTKLSSSGKTQLAEYFATPPFKVITLPSYDDAWANGLNAMQMSSSPGVLAGDLLEIDISLAKLTALSLNTQAFTRVQAMNEGDSAMQTTHILLAENSRLFYLPHPLVLHKDSVFKQQTQIEMGEQSELIYGEIVAIGRVLNDERFAFRQFSSHLKIYTLKDDGKKRPLVSDCIQWLPSKMNLTALSQMENYSHQGSLTYLNLAKNNAEIKQQVQALQQQSTEEKDLLIGISQLNEYGLMVRVLGCRAEQIQKLFEKIGRLLKSV.

The protein belongs to the UreD family. UreD, UreF and UreG form a complex that acts as a GTP-hydrolysis-dependent molecular chaperone, activating the urease apoprotein by helping to assemble the nickel containing metallocenter of UreC. The UreE protein probably delivers the nickel.

Its subcellular location is the cytoplasm. In terms of biological role, required for maturation of urease via the functional incorporation of the urease nickel metallocenter. The polypeptide is Urease accessory protein UreD (Haemophilus influenzae (strain 86-028NP)).